A 320-amino-acid polypeptide reads, in one-letter code: Esterase LipI (320 aa).

Catalysis depends on residues Ser165, Asp261, and His291.

This sequence belongs to the 'GDXG' lipolytic enzyme family.

The catalysed reaction is a fatty acid ester + H2O = an aliphatic alcohol + a fatty acid + H(+). The enzyme catalyses a butanoate ester + H2O = an aliphatic alcohol + butanoate + H(+). It carries out the reaction an octanoate ester + H2O = an aliphatic alcohol + octanoate + H(+). It catalyses the reaction decanoate ester + H2O = decanoate + an aliphatic alcohol + H(+). The catalysed reaction is an acetyl ester + H2O = an aliphatic alcohol + acetate + H(+). The enzyme catalyses a dodecanoate ester + H2O = an aliphatic alcohol + dodecanoate + H(+). Inhibited by ionic detergents SDS (anions) and CTAB (cationic). Strongly inhibited by Zn(2+). Esterase that can hydrolyze short-chain esters with the carbon chain containing 2 to 12 carbon atoms. In vitro, pNP-butyrate is the preferred substrate. The polypeptide is Esterase LipI (Mycobacterium tuberculosis (strain ATCC 25618 / H37Rv)).